Reading from the N-terminus, the 407-residue chain is Imidazolonepropionase (407 aa).

Positions 75 and 77 each coordinate Fe(3+). Residues H75 and H77 each contribute to the Zn(2+) site. Residues R84, Y147, and H180 each coordinate 4-imidazolone-5-propanoate. N-formimidoyl-L-glutamate is bound at residue Y147. H245 lines the Fe(3+) pocket. H245 is a Zn(2+) binding site. Position 248 (Q248) interacts with 4-imidazolone-5-propanoate. Fe(3+) is bound at residue D320. A Zn(2+)-binding site is contributed by D320. The N-formimidoyl-L-glutamate site is built by N322 and G324. Position 325 (S325) interacts with 4-imidazolone-5-propanoate.

It belongs to the metallo-dependent hydrolases superfamily. HutI family. It depends on Zn(2+) as a cofactor. Fe(3+) is required as a cofactor.

The protein resides in the cytoplasm. The catalysed reaction is 4-imidazolone-5-propanoate + H2O = N-formimidoyl-L-glutamate. It functions in the pathway amino-acid degradation; L-histidine degradation into L-glutamate; N-formimidoyl-L-glutamate from L-histidine: step 3/3. Its function is as follows. Catalyzes the hydrolytic cleavage of the carbon-nitrogen bond in imidazolone-5-propanoate to yield N-formimidoyl-L-glutamate. It is the third step in the universal histidine degradation pathway. The protein is Imidazolonepropionase of Pseudoalteromonas atlantica (strain T6c / ATCC BAA-1087).